A 369-amino-acid polypeptide reads, in one-letter code: Type 2 DNA topoisomerase 6 subunit A (369 aa).

In terms of domain architecture, Topo IIA-type catalytic spans 10-146 (KPREIAKQKI…LGFIPEEDGS (137 aa)). The O-(5'-phospho-DNA)-tyrosine intermediate role is filled by tyrosine 103. Positions 197 and 249 each coordinate Mg(2+).

It belongs to the TOP6A family. Homodimer. Heterotetramer of two Top6A and two Top6B chains. Mg(2+) is required as a cofactor.

The catalysed reaction is ATP-dependent breakage, passage and rejoining of double-stranded DNA.. In terms of biological role, relaxes both positive and negative superturns and exhibits a strong decatenase activity. The chain is Type 2 DNA topoisomerase 6 subunit A from Methanocaldococcus jannaschii (strain ATCC 43067 / DSM 2661 / JAL-1 / JCM 10045 / NBRC 100440) (Methanococcus jannaschii).